We begin with the raw amino-acid sequence, 1137 residues long: Phytochrome C (1137 aa).

Low complexity predominate over residues 1-18; the sequence is MSSSRSNNRATCSRSSSA. The disordered stretch occupies residues 1-27; sequence MSSSRSNNRATCSRSSSARSKHSARVV. A GAF domain is found at 217-400; sequence NLSLLCDVLV…VFGIQINKEV (184 aa). Phytochromobilin is bound at residue Cys322. PAS domains lie at 620–690 and 750–824; these read VTNE…LQGI and IQGD…TKLS. Residues 904–1124 enclose the Histidine kinase domain; the sequence is YIRQELRNPL…IVLVEFPVAQ (221 aa).

The protein belongs to the phytochrome family. Homodimer. Contains one covalently linked phytochromobilin chromophore.

Its function is as follows. Regulatory photoreceptor which exists in two forms that are reversibly interconvertible by light: the Pr form that absorbs maximally in the red region of the spectrum and the Pfr form that absorbs maximally in the far-red region. Photoconversion of Pr to Pfr induces an array of morphogenic responses, whereas reconversion of Pfr to Pr cancels the induction of those responses. Pfr controls the expression of a number of nuclear genes including those encoding the small subunit of ribulose-bisphosphate carboxylase, chlorophyll A/B binding protein, protochlorophyllide reductase, rRNA, etc. It also controls the expression of its own gene(s) in a negative feedback fashion. The polypeptide is Phytochrome C (PHYC) (Oryza sativa subsp. indica (Rice)).